A 330-amino-acid chain; its full sequence is RNA polymerase sigma factor RpoS (330 aa).

The sigma-70 factor domain-1 stretch occupies residues 56–89 (DATQLYLGEIGYSPLLTAEEEVYFARRALRGDVA). Residues 94–164 (MIESNLRLVV…ERAIMNQTRT (71 aa)) are sigma-70 factor domain-2. An Interaction with polymerase core subunit RpoC motif is present at residues 118-121 (DLIE). The sigma-70 factor domain-3 stretch occupies residues 174-249 (ELNVYLRTAR…DEKENGPEDT (76 aa)). The interval 262 to 315 (WLFELNAKQREVLARRFGLLGYEAATLEDVGREIGLTRERVRQIQVEGLRRLRE) is sigma-70 factor domain-4. The H-T-H motif DNA-binding region spans 288–307 (LEDVGREIGLTRERVRQIQV).

Belongs to the sigma-70 factor family. RpoS subfamily. As to quaternary structure, interacts with the RNA polymerase core enzyme and RssB.

It localises to the cytoplasm. Its function is as follows. Sigma factors are initiation factors that promote the attachment of RNA polymerase to specific initiation sites and are then released. This sigma factor is the master transcriptional regulator of the stationary phase and the general stress response. Controls, positively or negatively, the expression of several hundred genes, which are mainly involved in metabolism, transport, regulation and stress management. Protects stationary phase cells from killing induced by endoribonuclease MazF. This is RNA polymerase sigma factor RpoS from Escherichia coli (strain K12).